The primary structure comprises 210 residues: ATP-dependent dethiobiotin synthetase BioD (210 aa).

ATP is bound at residue 12-17 (NVGKTH). Thr-16 provides a ligand contact to Mg(2+). Residue Lys-37 is part of the active site. Thr-41 is a binding site for substrate. Position 114 (Glu-114) interacts with Mg(2+). Residue 114–117 (EGAG) participates in ATP binding.

Belongs to the dethiobiotin synthetase family. Homodimer. Mg(2+) is required as a cofactor.

The protein localises to the cytoplasm. The enzyme catalyses (7R,8S)-7,8-diammoniononanoate + CO2 + ATP = (4R,5S)-dethiobiotin + ADP + phosphate + 3 H(+). The protein operates within cofactor biosynthesis; biotin biosynthesis; biotin from 7,8-diaminononanoate: step 1/2. Functionally, catalyzes a mechanistically unusual reaction, the ATP-dependent insertion of CO2 between the N7 and N8 nitrogen atoms of 7,8-diaminopelargonic acid (DAPA, also called 7,8-diammoniononanoate) to form a ureido ring. This Sulfurovum sp. (strain NBC37-1) protein is ATP-dependent dethiobiotin synthetase BioD.